The sequence spans 214 residues: A-type ATP synthase subunit D (214 aa).

The protein belongs to the V-ATPase D subunit family. Has multiple subunits with at least A(3), B(3), C, D, E, F, H, I and proteolipid K(x).

The protein resides in the cell membrane. Functionally, component of the A-type ATP synthase that produces ATP from ADP in the presence of a proton gradient across the membrane. This chain is A-type ATP synthase subunit D, found in Desulfurococcus sp. (strain SY).